Reading from the N-terminus, the 427-residue chain is MSAIVDIIGREILDSRGNPTVECDVLLESGTMGRAAVPSGASTGSREAIELRDGEAGRYNGKGVLKAVEHINTEISEAIMGLDASEQAFLDKTLLELDGTDNKSRLGANAMLAVSMAVAKAAAEEAGLPLYRYFGGSGAMQLPVPMMNIVNGGAHANNSLDIQEFMIVPVSQPTFREALRCGAEVFHALKKILSDRGMSTAVGDEGGFAPNFGSNDECLSTILQAIEKAGYRAGEDVLLALDCAASEFYHDGKYQLAGEGLQLSSAEFTDYLSTLADKFPIVSIEDGMHESDWDGWKLLTDRLGKKVQLVGDDLFVTNTRILKEGIEKGIANSILIKINQIGTLTETFAAIEMAKRASYTAVISHRSGETEDSTIADIAVGLNAGQIKTGSLSRSDRISKYNQLLRIEEDLGDIASYPGKSAFYNLR.

(2R)-2-phosphoglycerate is bound at residue Gln-163. Glu-205 functions as the Proton donor in the catalytic mechanism. Mg(2+) contacts are provided by Asp-242, Glu-285, and Asp-312. 4 residues coordinate (2R)-2-phosphoglycerate: Lys-337, Arg-366, Ser-367, and Lys-388. Lys-337 functions as the Proton acceptor in the catalytic mechanism.

The protein belongs to the enolase family. Mg(2+) serves as cofactor.

It is found in the cytoplasm. It localises to the secreted. The protein localises to the cell surface. It catalyses the reaction (2R)-2-phosphoglycerate = phosphoenolpyruvate + H2O. The protein operates within carbohydrate degradation; glycolysis; pyruvate from D-glyceraldehyde 3-phosphate: step 4/5. Its function is as follows. Catalyzes the reversible conversion of 2-phosphoglycerate (2-PG) into phosphoenolpyruvate (PEP). It is essential for the degradation of carbohydrates via glycolysis. In Burkholderia multivorans (strain ATCC 17616 / 249), this protein is Enolase.